Reading from the N-terminus, the 1121-residue chain is Solute carrier family 38 member 10 (1121 aa).

10 helical membrane-spanning segments follow: residues 4–24 (AAAS…GVSV), 36–58 (IVLG…MFLV), 84–104 (LVET…YVVI), 120–140 (VGGT…VLPL), 153–173 (FSAM…LSSL), 229–249 (IFAS…FFGY), 272–292 (MLRV…ILPC), 323–343 (ALTL…PNVE), 345–365 (ILGL…PALI), and 378–398 (VVLW…LSVS). 3 disordered regions span residues 434-691 (VVAV…EEAG), 731-904 (KEIH…AATG), and 965-1068 (ISDG…ELAP). Composition is skewed to basic and acidic residues over residues 439–454 (EDGR…REEL), 466–475 (PGREDGKEAQ), 493–508 (EAHR…KVVV), and 544–559 (DSER…EVGK). Phosphoserine is present on serine 612. Basic and acidic residues-rich tracts occupy residues 645-659 (DSDH…EEKP), 668-679 (EPREQRDVERAG), 731-752 (KEIH…EVHP), 763-773 (EAPEGKARETM), 802-811 (SLEHPERPVG), and 863-876 (PARE…RLAE). Threonine 772 carries the phosphothreonine modification. The residue at position 802 (serine 802) is a Phosphoserine. 2 positions are modified to phosphoserine: serine 890 and serine 966. A compositionally biased stretch (basic and acidic residues) spans 976-998 (HRLDHGGYLEMRKEARGGDHMPV). Serine 999 is modified (phosphoserine). Composition is skewed to basic and acidic residues over residues 1035-1044 (DNAKPNRDLK) and 1057-1068 (DLGPHAEGELAP).

This sequence belongs to the amino acid/polyamine transporter 2 family.

The protein resides in the membrane. It carries out the reaction L-glutamate(out) = L-glutamate(in). The enzyme catalyses L-glutamine(out) = L-glutamine(in). It catalyses the reaction L-alanine(in) = L-alanine(out). The catalysed reaction is L-serine(in) = L-serine(out). It carries out the reaction L-leucine(in) = L-leucine(out). Facilitates bidirectional transport of amino acids. May act as a glutamate sensor that regulates glutamate-glutamine cycle and mTOR signaling in the brain. The transport mechanism remains to be elucidated. The chain is Solute carrier family 38 member 10 from Pongo abelii (Sumatran orangutan).